Consider the following 64-residue polypeptide: MSRICQITGKGPMVGNNVSHANNKTKRRFLPNLRTVRITLEDGTTRKVRVAASTLRTLKKQSSK.

The protein belongs to the bacterial ribosomal protein bL28 family.

This Campylobacter lari (strain RM2100 / D67 / ATCC BAA-1060) protein is Large ribosomal subunit protein bL28.